An 85-amino-acid chain; its full sequence is MLVLTRKQGEKILIGDDIEITVLDTRGDGIRIGISAPRGIRIQRDEVRKAIEAENRSAAMRNPAAEFELIASLTALQNAEDPPPR.

The protein belongs to the CsrA/RsmA family. Homodimer; the beta-strands of each monomer intercalate to form a hydrophobic core, while the alpha-helices form wings that extend away from the core.

The protein localises to the cytoplasm. Its function is as follows. A translational regulator that binds mRNA to regulate translation initiation and/or mRNA stability. Usually binds in the 5'-UTR at or near the Shine-Dalgarno sequence preventing ribosome-binding, thus repressing translation. Its main target seems to be the major flagellin gene, while its function is anatagonized by FliW. This is Translational regulator CsrA from Leifsonia xyli subsp. xyli (strain CTCB07).